The primary structure comprises 164 residues: 4-hydroxy-4-methyl-2-oxoglutarate aldolase (164 aa).

Residues 74 to 77 (GGNL) and arginine 96 each bind substrate. A divalent metal cation is bound at residue aspartate 97.

Belongs to the class II aldolase/RraA-like family. Homotrimer. Ni(2+) is required as a cofactor. It depends on Co(2+) as a cofactor. Requires Zn(2+) as cofactor.

It catalyses the reaction 4-hydroxy-4-methyl-2-oxoglutarate = 2 pyruvate. The enzyme catalyses oxaloacetate + H(+) = pyruvate + CO2. Its activity is regulated as follows. Competitively inhibited by oxalate, a pyruvate enolate analog. In terms of biological role, catalyzes the aldol cleavage of 4-hydroxy-4-methyl-2-oxoglutarate (HMG) into 2 molecules of pyruvate. Also contains a secondary oxaloacetate (OAA) decarboxylase activity due to the common pyruvate enolate transition state formed following C-C bond cleavage in the retro-aldol and decarboxylation reactions. In Thermus thermophilus (strain ATCC 27634 / DSM 579 / HB8), this protein is 4-hydroxy-4-methyl-2-oxoglutarate aldolase.